We begin with the raw amino-acid sequence, 365 residues long: Peptide chain release factor 2 (365 aa).

Glutamine 252 is modified (N5-methylglutamine).

Belongs to the prokaryotic/mitochondrial release factor family. Post-translationally, methylated by PrmC. Methylation increases the termination efficiency of RF2.

The protein localises to the cytoplasm. In terms of biological role, peptide chain release factor 2 directs the termination of translation in response to the peptide chain termination codons UGA and UAA. This chain is Peptide chain release factor 2, found in Aliivibrio fischeri (strain ATCC 700601 / ES114) (Vibrio fischeri).